The following is a 699-amino-acid chain: DNA topoisomerase 1 (699 aa).

Basic and acidic residues-rich tracts occupy residues 1–15 and 22–35; these read MAKSKVVEKDKKNEL and IELKGQSKNEESKG. Positions 1-37 are disordered; it reads MAKSKVVEKDKKNELDNQSADIELKGQSKNEESKGGK. Positions 38 to 146 constitute a Toprim domain; the sequence is KKVIIVESPA…NIITFTEITE (109 aa). The Mg(2+) site is built by E44 and D115. The Topo IA-type catalytic domain maps to 160–583; it reads DMNKVNAQLA…SFLKEFNKDL (424 aa). Residues 194–199 form an interaction with DNA region; it reads SAGRVQ. Residue Y324 is the O-(5'-phospho-DNA)-tyrosine intermediate of the active site. Residues 601–624 form a C4-type zinc finger; sequence CEDCSGNYKLKVGKYGLYLHCPNC. Residues 649 to 699 form a disordered region; that stretch reads QESQEENGEKNSVQSEESSANSGNRKFYRKRRTSGSKKSSTKSASSKAKKK. Polar residues predominate over residues 661–672; it reads VQSEESSANSGN. The segment covering 674-683 has biased composition (basic residues); sequence KFYRKRRTSG. The span at 684-699 shows a compositional bias: low complexity; it reads SKKSSTKSASSKAKKK.

Belongs to the type IA topoisomerase family. As to quaternary structure, monomer. The cofactor is Mg(2+).

The catalysed reaction is ATP-independent breakage of single-stranded DNA, followed by passage and rejoining.. Functionally, releases the supercoiling and torsional tension of DNA, which is introduced during the DNA replication and transcription, by transiently cleaving and rejoining one strand of the DNA duplex. Introduces a single-strand break via transesterification at a target site in duplex DNA. The scissile phosphodiester is attacked by the catalytic tyrosine of the enzyme, resulting in the formation of a DNA-(5'-phosphotyrosyl)-enzyme intermediate and the expulsion of a 3'-OH DNA strand. The free DNA strand then undergoes passage around the unbroken strand, thus removing DNA supercoils. Finally, in the religation step, the DNA 3'-OH attacks the covalent intermediate to expel the active-site tyrosine and restore the DNA phosphodiester backbone. The polypeptide is DNA topoisomerase 1 (Fervidobacterium islandicum).